A 397-amino-acid chain; its full sequence is MGWKTLDDMDLAGKVVLVRVDVNVPMENGEVTDATRIEKIVPTVEDILKKGGKPVLLAHFGRPKGKVVDEMSLRLVLPALQKALPGTKVSFAADCVGPEPEQAVAAMLEGEVLLLENTRFHAGEEKNDPELAAAMAKLGQVYVNDAFSAAHRAHASTEGLARLLPSAAGRLMEAELKALEAALGHPERPVVAVVGGAKVSTKLDLLGNLVGRVDHLVIGGGMANTFLVAQGIEVGKSLAERDMADTAREILSKAKAAGCTIHLPLDVVVAREFKAGAANETVETSACPADAMILDAGPKTVAALSEVFASAKTLIWNGPLGAFEIEPFDAATNAAALQVAQLTKAGQLISVAGGGDTVAALNKAGAAEGFSYISTAGGAFLEWMEGKELPGVAALTV.

Residues 21–23 (DVN), Arg36, 59–62 (HFGR), Arg119, and Arg152 each bind substrate. Residues Lys202, Glu324, and 354-357 (GGDT) contribute to the ATP site.

Belongs to the phosphoglycerate kinase family. As to quaternary structure, monomer.

The protein resides in the cytoplasm. It catalyses the reaction (2R)-3-phosphoglycerate + ATP = (2R)-3-phospho-glyceroyl phosphate + ADP. The protein operates within carbohydrate degradation; glycolysis; pyruvate from D-glyceraldehyde 3-phosphate: step 2/5. The sequence is that of Phosphoglycerate kinase from Cereibacter sphaeroides (strain ATCC 17029 / ATH 2.4.9) (Rhodobacter sphaeroides).